A 302-amino-acid chain; its full sequence is Putative glycine N-acyltransferase-like protein 1B (302 aa).

This sequence belongs to the glycine N-acyltransferase family.

The enzyme catalyses an acyl-CoA + L-glutamine = an N(2)-acyl-L-glutamine + CoA + H(+). Its function is as follows. Putative acyltransferase which transfers an acyl group to the N-terminus of glutamine. Can use phenylacetyl-CoA as an acyl donor. This is Putative glycine N-acyltransferase-like protein 1B from Homo sapiens (Human).